Consider the following 705-residue polypeptide: Probable glutamate carboxypeptidase AMP1 (705 aa).

At 1-24 (MSQPLTTRPTVTGISIIPFRQPPP) the chain is on the cytoplasmic side. Residues 25-42 (LCSFLFVIVLFVATFYTL) traverse the membrane as a helical; Signal-anchor for type II membrane protein segment. The Extracellular segment spans residues 43-705 (HHPDAVTPPL…ASKALKGGFT (663 aa)). Asn-74, Asn-137, and Asn-322 each carry an N-linked (GlcNAc...) asparagine glycan. A catalytic region spans residues 255 to 548 (GVVGGEKLSL…GIWGLLGILL (294 aa)). Residues His-356 and Asp-366 each coordinate Zn(2+). Glu-403 serves as the catalytic Nucleophile. Residues Glu-404, Asp-432, and His-514 each coordinate Zn(2+). An N-linked (GlcNAc...) asparagine glycan is attached at Asn-676.

The protein belongs to the peptidase M28 family. M28B subfamily. Zn(2+) serves as cofactor. In terms of tissue distribution, expressed in all plant parts. Highest levels in the bolt stem, inflorescence, root and silique. Low level in leaves.

It is found in the endoplasmic reticulum membrane. It carries out the reaction Release of an unsubstituted, C-terminal glutamyl residue, typically from Ac-Asp-Glu or folylpoly-gamma-glutamates.. In terms of biological role, may modulate the level of one or more small signaling molecules that have a role in regulating meristem function. May play a role in balancing and restricting the meristem-promoting activity of auxin signaling. Involved in ethylene and giberellin (GA) signaling pathways or in a parallel pathway controlling cell and hypocotyl elongation and cellular organization. Involved in abscisic acid (ABA) signaling pathway. Plays a negative role in ABA-mediated seed germination and seedling development. Acts in association with LAMP1 to suppress ectopic stem cell niche formation in the shoot apical meristem (SAM) independently of cytokinin signaling pathway. Modulates responses to ABA, oxidative stress and abotic stress. Acts as a negative regulator of the ABA signaling pathway to modulate freezing and drought stress responses. Mediates carbon and amino acid metabolism. May be involved in the acquisition and/or maintenance of seed dormancy. Involved in the regulation of response to heat shock and plant defense. In Arabidopsis thaliana (Mouse-ear cress), this protein is Probable glutamate carboxypeptidase AMP1.